A 314-amino-acid polypeptide reads, in one-letter code: tRNA-cytidine(32) 2-sulfurtransferase (314 aa).

The PP-loop motif motif lies at 49-54 (SGGKDS). Residues Cys-124, Cys-127, and Cys-215 each contribute to the [4Fe-4S] cluster site.

The protein belongs to the TtcA family. Homodimer. The cofactor is Mg(2+). Requires [4Fe-4S] cluster as cofactor.

It is found in the cytoplasm. The enzyme catalyses cytidine(32) in tRNA + S-sulfanyl-L-cysteinyl-[cysteine desulfurase] + AH2 + ATP = 2-thiocytidine(32) in tRNA + L-cysteinyl-[cysteine desulfurase] + A + AMP + diphosphate + H(+). It participates in tRNA modification. Functionally, catalyzes the ATP-dependent 2-thiolation of cytidine in position 32 of tRNA, to form 2-thiocytidine (s(2)C32). The sulfur atoms are provided by the cysteine/cysteine desulfurase (IscS) system. The polypeptide is tRNA-cytidine(32) 2-sulfurtransferase (Pasteurella multocida (strain Pm70)).